A 426-amino-acid chain; its full sequence is Stationary phase-inducible protein CsiE (426 aa).

2 consecutive PRD domains span residues 120–225 (ARNF…DPLR) and 229–336 (QRDR…ENDL).

The chain is Stationary phase-inducible protein CsiE (csiE) from Escherichia coli (strain K12).